Consider the following 229-residue polypeptide: DNA repair protein RecO (229 aa).

This sequence belongs to the RecO family.

Its function is as follows. Involved in DNA repair and RecF pathway recombination. The sequence is that of DNA repair protein RecO from Legionella pneumophila subsp. pneumophila (strain Philadelphia 1 / ATCC 33152 / DSM 7513).